We begin with the raw amino-acid sequence, 166 residues long: Probable chemoreceptor glutamine deamidase CheD (166 aa).

This sequence belongs to the CheD family.

It catalyses the reaction L-glutaminyl-[protein] + H2O = L-glutamyl-[protein] + NH4(+). In terms of biological role, probably deamidates glutamine residues to glutamate on methyl-accepting chemotaxis receptors (MCPs), playing an important role in chemotaxis. The protein is Probable chemoreceptor glutamine deamidase CheD of Oceanobacillus iheyensis (strain DSM 14371 / CIP 107618 / JCM 11309 / KCTC 3954 / HTE831).